The sequence spans 145 residues: Aminoglycoside N(6')-acetyltransferase type 1 (145 aa).

The region spanning 1–145 (MDIRQMNRTH…ERVIFYRKRC (145 aa)) is the N-acetyltransferase domain. Substrate is bound by residues W22, H25, Y66, and E79. Residues 81–83 (IFV) and 89–94 (QRGVAK) each bind acetyl-CoA. Position 115 (D115) interacts with substrate. N120 contributes to the acetyl-CoA binding site. Residue E136 coordinates substrate.

Homodimer.

The catalysed reaction is kanamycin B + acetyl-CoA = N(6')-acetylkanamycin B + CoA + H(+). Functionally, catalyzes the transfer of an acetyl group from acetyl-CoA to the 6'-amino group of aminoglycoside molecules conferring resistance to antibiotics containing the purpurosamine ring. This is Aminoglycoside N(6')-acetyltransferase type 1 from Salmonella typhimurium (strain LT2 / SGSC1412 / ATCC 700720).